Here is a 438-residue protein sequence, read N- to C-terminus: Serine/threonine-protein kinase VIK (438 aa).

Residues 1 to 31 form a disordered region; the sequence is MSSDSPAAGDGGEQAAAGTSVPSPSYDKQKE. 3 ANK repeats span residues 36 to 65, 70 to 99, and 103 to 133; these read SRTS…TLVH, DKRT…DVNA, and WKNT…SYGQ. In terms of domain architecture, Protein kinase spans 162 to 427; it reads FSNAAMIGKG…KRLEKIKETL (266 aa). ATP-binding positions include 168–176 and lysine 189; that span reads IGKGSFGEI. The active-site Proton acceptor is aspartate 285.

Belongs to the protein kinase superfamily. Ser/Thr protein kinase family. In terms of assembly, interacts with BRL2. Binds to MSSP1/TMT1 at the tonoplast. Post-translationally, phosphorylated. As to expression, restricted to mature vascular cells. Mostly expressed in mature leaves and seeds, and, to a lower level, in seedlings, young leaves, flowers and siliques.

The protein resides in the vacuole. It carries out the reaction L-seryl-[protein] + ATP = O-phospho-L-seryl-[protein] + ADP + H(+). It catalyses the reaction L-threonyl-[protein] + ATP = O-phospho-L-threonyl-[protein] + ADP + H(+). Its function is as follows. Serine/threonine protein kinase which may function as an adapter protein for BRL2. Required during vascular development for the establishment of vein pattern in foliar organs. Mediates MSSP1/TMT1 phosphorylation and activation to enhance its carrier activity and consequently vacuolar sugar accumulation, particularly in response to cold. The polypeptide is Serine/threonine-protein kinase VIK (Arabidopsis thaliana (Mouse-ear cress)).